Reading from the N-terminus, the 178-residue chain is Putative pre-16S rRNA nuclease (178 aa).

2 stretches are compositionally biased toward basic and acidic residues: residues 1–18 (MDHAEQGPDRPGVDDPGR) and 50–60 (PRSKDRGPDAP). Disordered regions lie at residues 1–23 (MDHAEQGPDRPGVDDPGRGRRIG) and 36–60 (SDPDGILATPVETVPRSKDRGPDAP).

It belongs to the YqgF nuclease family.

The protein resides in the cytoplasm. In terms of biological role, could be a nuclease involved in processing of the 5'-end of pre-16S rRNA. The polypeptide is Putative pre-16S rRNA nuclease (Rhodococcus opacus (strain B4)).